An 893-amino-acid chain; its full sequence is POU domain protein 2, isoform B (893 aa).

The disordered stretch occupies residues 586-668; the sequence is QMKQQQREDP…STPKPTSGLT (83 aa). A compositionally biased stretch (low complexity) spans 602–617; the sequence is PLAKSPLRSPSLSPVP. Polar residues predominate over residues 623–646; that stretch reads QQRTPPNSMTANSLGMSSAVMTPN. Residues 647 to 665 are compositionally biased toward low complexity; sequence TPSMQQQPQLQQSTPKPTS. The 75-residue stretch at 681 to 755 folds into the POU-specific domain; the sequence is EETTDLEELE…LLQKWLEDAD (75 aa). A DNA-binding region (homeobox) is located at residues 786-845; that stretch reads RRKKRTSIETTVRTTLEKAFLMNCKPTSEEISQLSERLNMDKEVIRVWFCNRRQKEKRIN.

This sequence belongs to the POU transcription factor family. Class-2 subfamily. Initial expression in cellular blastoderm stage, then in ectodermal stripes during germband extension. Broad expression in the neuroectoderm followed by limitation to discrete subsets of CNS cells, and expression in specific PNS neurons and support cells.

It localises to the nucleus. Functionally, DNA-binding regulatory protein implicated in early development. Involved in neuronal cell fate decision. May act as an octamer-dependent activator of transcription. Could also play an early role in specific ectodermal cells, and a subsequent role in the embryonic nervous system. The polypeptide is POU domain protein 2, isoform B (Drosophila melanogaster (Fruit fly)).